A 217-amino-acid polypeptide reads, in one-letter code: MKLIIVLVMMLVCVYSMSIEKNIPKNHEVPAKKQFAETKVEKKKRSDDGDEEICDDDDEDCEDVVDIEECNEDDDDCVDGGETEECDEDDDDCQEEKKKKKRETKPKLKKRNDDEEEEECEEDDEDCEVEVDIEECDEEDDDCYDEDKKKKKENKLKKESKKKNSKKTVPKNAKKSSKRSTSTKKTSQKKQQDKRGAIQKNLKIKEANFKKKFNLNF.

Residues Met1–Ser16 form the signal peptide. Over residues Pro24 to Asp47 the composition is skewed to basic and acidic residues. Disordered regions lie at residues Pro24–Asp58 and Glu72–Lys205. Repeat copies occupy residues Lys32 to Gly81 and Lys98 to Asp147. A 2 X 50 AA approximate repeats region spans residues Lys32–Asp147. Acidic residues-rich tracts occupy residues Asp48–Asp58 and Glu72–Gln94. Positions Lys98–Lys110 are enriched in basic residues. Positions Asp114–Asp145 are enriched in acidic residues. Over residues Lys149–Gln188 the composition is skewed to basic residues.

In terms of tissue distribution, expressed in tentacle-specific epithelial cells (battery cells) as well as in a small fraction of ectodermal epithelial cells in the gastric region subjacent to the tentacles (the tentacle formation region). The later cells are committed to become battery cells.

Functionally, responds to early signals of head formation in hydra. The protein is KS1 protein (KS1) of Hydra vulgaris (Hydra).